The sequence spans 190 residues: uncharacterized protein (190 aa).

Residues 1-16 (MAILPEFISQTPPVTR) are Cytoplasmic-facing. A helical membrane pass occupies residues 17 to 37 (YIVLGTLFTTLAVNFGYVSDL). Residues 38-55 (KIFFNWKLFLAKGEYWRA) lie on the Lumenal side of the membrane. The helical transmembrane segment at 56–76 (ITTFLYVGPFGLELILYLSFL) threads the bilayer. Residues 77 to 98 (LRFMSMLERSSPPPQTQSFLKT) are Cytoplasmic-facing. The helical transmembrane segment at 99–119 (VLIVWFSLLVTSYFSYMPFAA) threads the bilayer. Topologically, residues 120–138 (SYFSFTMLYIWSWKHPLYR) are lumenal. A helical transmembrane segment spans residues 139 to 159 (ISILGLFDVKAPYVPWVMVLL). At 160-163 (RWLR) the chain is on the cytoplasmic side. Residues 164 to 184 (TGIFPLLDLISALIGHVYFFV) traverse the membrane as a helical segment. Over 185 to 190 (TDFSTV) the chain is Lumenal.

Belongs to the derlin family.

It is found in the endoplasmic reticulum membrane. This is an uncharacterized protein from Schizosaccharomyces pombe (strain 972 / ATCC 24843) (Fission yeast).